The chain runs to 316 residues: Pantothenate kinase (316 aa).

Position 95-102 (95-102) interacts with ATP; that stretch reads GSVAVGKS.

This sequence belongs to the prokaryotic pantothenate kinase family.

The protein localises to the cytoplasm. It carries out the reaction (R)-pantothenate + ATP = (R)-4'-phosphopantothenate + ADP + H(+). The protein operates within cofactor biosynthesis; coenzyme A biosynthesis; CoA from (R)-pantothenate: step 1/5. The protein is Pantothenate kinase of Shewanella halifaxensis (strain HAW-EB4).